A 46-amino-acid chain; its full sequence is Bottromycin D (46 aa).

A propeptide spanning residues 10–46 (MTADFLNDDPNNAELSSLEMEELESWGAWSDDTDQSV) is cleaved from the precursor.

Post-translationally, the precursor peptide is first ribosomally synthesized and then highly tailored by specific enzymes to yield the final natural product. These modifications include several methylations, cyclization and the formation of t-Leu and Thia-beta-Ala residues.

The protein localises to the secreted. In terms of biological role, bottromycin D is a ribosomally synthesized and post-translationally modified peptide (RiPP) that displays antibiotic activity against methicillin-resistant S.aureus (MRSA). This is Bottromycin D from Streptomyces sp.